The following is a 565-amino-acid chain: Adenine deaminase (565 aa).

The protein belongs to the metallo-dependent hydrolases superfamily. Adenine deaminase family. The cofactor is Mn(2+).

It carries out the reaction adenine + H2O + H(+) = hypoxanthine + NH4(+). The chain is Adenine deaminase from Cereibacter sphaeroides (strain ATCC 17025 / ATH 2.4.3) (Rhodobacter sphaeroides).